Reading from the N-terminus, the 64-residue chain is Large ribosomal subunit protein uL29 (64 aa).

It belongs to the universal ribosomal protein uL29 family.

The sequence is that of Large ribosomal subunit protein uL29 from Burkholderia ambifaria (strain MC40-6).